The chain runs to 251 residues: Phosphate import ATP-binding protein PstB (251 aa).

The region spanning 5–246 (MNSKDVNFWY…PENKKTEDYI (242 aa)) is the ABC transporter domain. 37 to 44 (GPSGCGKS) is an ATP binding site.

The protein belongs to the ABC transporter superfamily. Phosphate importer (TC 3.A.1.7) family. In terms of assembly, the complex is composed of two ATP-binding proteins (PstB), two transmembrane proteins (PstC and PstA) and a solute-binding protein (PstS).

Its subcellular location is the cell membrane. The catalysed reaction is phosphate(out) + ATP + H2O = ADP + 2 phosphate(in) + H(+). Functionally, part of the ABC transporter complex PstSACB involved in phosphate import. Responsible for energy coupling to the transport system. This chain is Phosphate import ATP-binding protein PstB, found in Methanococcus maripaludis (strain DSM 14266 / JCM 13030 / NBRC 101832 / S2 / LL).